We begin with the raw amino-acid sequence, 215 residues long: Pyrrolidone-carboxylate peptidase (215 aa).

Residues E80, C143, and H167 contribute to the active site.

It belongs to the peptidase C15 family. In terms of assembly, homotetramer.

It localises to the cytoplasm. The enzyme catalyses Release of an N-terminal pyroglutamyl group from a polypeptide, the second amino acid generally not being Pro.. Removes 5-oxoproline from various penultimate amino acid residues except L-proline. This chain is Pyrrolidone-carboxylate peptidase, found in Bacillus cereus (strain ZK / E33L).